The primary structure comprises 215 residues: Small ribosomal subunit protein uS3 (215 aa).

The 69-residue stretch at 38 to 106 (LRAFLKKKLF…EVLIDIQEIR (69 aa)) folds into the KH type-2 domain.

The protein belongs to the universal ribosomal protein uS3 family. Part of the 30S ribosomal subunit. Forms a tight complex with proteins S10 and S14.

Its function is as follows. Binds the lower part of the 30S subunit head. Binds mRNA in the 70S ribosome, positioning it for translation. In Desulforapulum autotrophicum (strain ATCC 43914 / DSM 3382 / VKM B-1955 / HRM2) (Desulfobacterium autotrophicum), this protein is Small ribosomal subunit protein uS3.